A 97-amino-acid chain; its full sequence is Small ribosomal subunit protein bS6 (97 aa).

Belongs to the bacterial ribosomal protein bS6 family.

Functionally, binds together with bS18 to 16S ribosomal RNA. The polypeptide is Small ribosomal subunit protein bS6 (Syntrophomonas wolfei subsp. wolfei (strain DSM 2245B / Goettingen)).